Reading from the N-terminus, the 1481-residue chain is Cystic fibrosis transmembrane conductance regulator (1481 aa).

The Cytoplasmic segment spans residues 1 to 77 (MQRSPLEKAS…KLINALRRCF (77 aa)). Residues 78 to 98 (FWRFMFYGIILYLGEVTKAVQ) form a helical membrane-spanning segment. An ABC transmembrane type-1 1 domain is found at 81–365 (FMFYGIILYL…WAVQTWYDSL (285 aa)). Over 99 to 122 (PLLLGRIIASYDPDNKVERSIAIY) the chain is Extracellular. The helical transmembrane segment at 123-146 (LGIGLCLLFIVRTLLLHPAIFGLH) threads the bilayer. Residues 147 to 195 (HIGMQMRIAMFSLIYKKTLKLSSRVLDKISIGQLVSLLSNNLNKFDEGL) lie on the Cytoplasmic side of the membrane. Residues 196 to 216 (ALAHFVWIAPLQVTLLMGLLW) form a helical membrane-spanning segment. Residues 217–222 (ELLQAF) lie on the Extracellular side of the membrane. The chain crosses the membrane as a helical span at residues 223-243 (TFCGLAFLIVLALLQAGLGKM). Over 244–298 (MMKYRDQRAGKINERLVITSEMIENIQSVKAYCWEEAMEKIIENLRQTELKLTRK) the chain is Cytoplasmic. Residues 299–319 (AAYVRYLNSSAFFFSGFFVVF) traverse the membrane as a helical segment. Residues 320 to 339 (LSVLPYALLKGIILRKIFTT) lie on the Extracellular side of the membrane. A helical transmembrane segment spans residues 340 to 358 (ISFCIVLRMAVTRQFPWAV). Topologically, residues 359–858 (QTWYDSLGAI…YLRYITVHKS (500 aa)) are cytoplasmic. Residues Trp401, 457-464 (GSTGAGKT), and Gln492 each bind ATP. One can recognise an ABC transporter 1 domain in the interval 423–645 (NGDNSLFFSN…RPDFSSKLMG (223 aa)). Cys523 carries the S-palmitoyl cysteine lipid modification. Residue Ser548 is modified to Phosphoserine. The disordered R region stretch occupies residues 653–831 (TAERRNSIIT…EEINEEDLRD (179 aa)). Residues Ser659 and Ser669 each carry the phosphoserine; by PKA modification. Phosphoserine; by PKC is present on Ser685. Lys687 participates in a covalent cross-link: Glycyl lysine isopeptide (Lys-Gly) (interchain with G-Cter in ubiquitin). Residue Ser699 is modified to Phosphoserine; by PKA. The residue at position 711 (Ser711) is a Phosphoserine. Phosphothreonine is present on Thr716. Phosphoserine; by PKA occurs at positions 736 and 767. Ser790 is subject to Phosphoserine; by PKC. Residues Ser795 and Ser813 each carry the phosphoserine; by PKA modification. Residues 859–879 (LMFVLIWCLVVFLVEVAASLV) form a helical membrane-spanning segment. An ABC transmembrane type-1 2 domain is found at 859–1155 (LMFVLIWCLV…AVNSSIDVDS (297 aa)). At 880 to 918 (VLCLFPKIFFQDKGNSTKSANNSYAVIITSTSSYYIFYI) the chain is on the extracellular side. N-linked (GlcNAc...) asparagine glycosylation is found at Asn894 and Asn900. Residues 919–939 (YVGVADTLLALGLFRGLPLVH) form a discontinuously helical membrane-spanning segment. The Cytoplasmic segment spans residues 940–990 (TLITVSKTLHHKMLQSVLQAPMSTLNTLKTGGILNRFSKDIAVLDDLLPLT). The chain crosses the membrane as a helical span at residues 991–1011 (IFDFVQLLLIVIGAVVVVSVL). Residues 1012–1013 (QP) are Extracellular-facing. Residues 1014-1034 (YIFLATVPVIAAFILLRAYFL) form a helical membrane-spanning segment. At 1035-1095 (HTSQQLKQLE…TANWFLYLST (61 aa)) the chain is on the cytoplasmic side. Residues 1096-1116 (LRWFQMRIEMIFVIFFIAVTF) traverse the membrane as a helical segment. Residues 1117-1130 (ISILTTGEGEGRVG) are Extracellular-facing. A helical transmembrane segment spans residues 1131–1151 (IILTLAMNIMGTLQWAVNSSI). Over 1152-1481 (DVDSLMRSVS…TEEEVQETKL (330 aa)) the chain is Cytoplasmic. Positions 1211-1444 (MTVKDLTAKY…KSLFRQAISP (234 aa)) constitute an ABC transporter 2 domain. ATP-binding positions include Tyr1220 and 1245 to 1252 (GRTGSGKS). Residues 1387–1481 (RTLKQAFANC…TEEEVQETKL (95 aa)) are interaction with GORASP2. Cys1396 carries S-palmitoyl cysteine lipidation. The tract at residues 1453-1481 (HRNSSRQRSRSNIAALKEETEEEVQETKL) is disordered. At Ser1457 the chain carries Phosphoserine. Acidic residues predominate over residues 1471–1481 (ETEEEVQETKL). The short motif at 1479–1481 (TKL) is the PDZ-binding element.

Belongs to the ABC transporter superfamily. ABCC family. CFTR transporter (TC 3.A.1.202) subfamily. Monomer; does not require oligomerization for channel activity. May form oligomers in the membrane. Interacts with SLC26A3, SLC26A6 and NHERF1. Interacts with SHANK2. Interacts with MYO6. Interacts (via C-terminus) with GOPC (via PDZ domain); this promotes CFTR internalization and thereby decreases channel activity. Interacts with SLC4A7 through NHERF1. Found in a complex with MYO5B and RAB11A. Interacts with ANO1. Interacts with SLC26A8. Interacts with AHCYL1; the interaction increases CFTR activity. Interacts with CSE1L. The core-glycosylated form interacts with GORASP2 (via PDZ GRASP-type 1 domain) in respone to ER stress. Interacts with MARCHF2; the interaction leads to CFTR ubiqtuitination and degradation. Interacts with ADGRG2. Post-translationally, N-glycosylated. Phosphorylated; cAMP treatment promotes phosphorylation and activates the channel. Dephosphorylation decreases the ATPase activity (in vitro). Phosphorylation at PKA sites activates the channel. Phosphorylation at PKC sites enhances the response to phosphorylation by PKA. Phosphorylated by AMPK; this inhibits channel activity. In terms of processing, ubiquitinated, leading to its degradation in the lysosome. Deubiquitination by USP10 in early endosomes enhances its endocytic recycling to the cell membrane. Ubiquitinated by RNF185 during ER stress. Ubiquitinated by MARCHF2.

It localises to the apical cell membrane. It is found in the early endosome membrane. Its subcellular location is the cell membrane. The protein resides in the recycling endosome membrane. The protein localises to the endoplasmic reticulum membrane. It localises to the nucleus. The enzyme catalyses ATP + H2O + closed Cl(-) channel = ADP + phosphate + open Cl(-) channel.. It carries out the reaction chloride(in) = chloride(out). The catalysed reaction is hydrogencarbonate(in) = hydrogencarbonate(out). It catalyses the reaction ATP + H2O = ADP + phosphate + H(+). Epithelial ion channel that plays an important role in the regulation of epithelial ion and water transport and fluid homeostasis. Mediates the transport of chloride ions across the cell membrane. Possesses an intrinsic ATPase activity and utilizes ATP to gate its channel; the passive flow of anions through the channel is gated by cycles of ATP binding and hydrolysis by the ATP-binding domains. The ion channel is also permeable to HCO(3)(-); selectivity depends on the extracellular chloride concentration. Exerts its function also by modulating the activity of other ion channels and transporters. Contributes to the regulation of the pH and the ion content of the epithelial fluid layer. Modulates the activity of the epithelial sodium channel (ENaC) complex, in part by regulating the cell surface expression of the ENaC complex. May regulate bicarbonate secretion and salvage in epithelial cells by regulating the transporter SLC4A7. Can inhibit the chloride channel activity of ANO1. Plays a role in the chloride and bicarbonate homeostasis during sperm epididymal maturation and capacitation. The sequence is that of Cystic fibrosis transmembrane conductance regulator from Bos taurus (Bovine).